The primary structure comprises 444 residues: Exodeoxyribonuclease 7 large subunit (444 aa).

It belongs to the XseA family. In terms of assembly, heterooligomer composed of large and small subunits.

Its subcellular location is the cytoplasm. It carries out the reaction Exonucleolytic cleavage in either 5'- to 3'- or 3'- to 5'-direction to yield nucleoside 5'-phosphates.. Bidirectionally degrades single-stranded DNA into large acid-insoluble oligonucleotides, which are then degraded further into small acid-soluble oligonucleotides. This is Exodeoxyribonuclease 7 large subunit from Hahella chejuensis (strain KCTC 2396).